The primary structure comprises 69 residues: Sec-independent protein translocase protein TatA (69 aa).

Residues 1–21 traverse the membrane as a helical segment; sequence MFPKLGMGELVVILLIVVILF. A disordered region spans residues 43 to 69; the sequence is SFSGEDEEKPSTPGATSSDEASKAKQA.

Belongs to the TatA/E family. As to quaternary structure, the Tat system comprises two distinct complexes: a TatABC complex, containing multiple copies of TatA, TatB and TatC subunits, and a separate TatA complex, containing only TatA subunits. Substrates initially bind to the TatABC complex, which probably triggers association of the separate TatA complex to form the active translocon.

It localises to the cell inner membrane. Part of the twin-arginine translocation (Tat) system that transports large folded proteins containing a characteristic twin-arginine motif in their signal peptide across membranes. TatA could form the protein-conducting channel of the Tat system. This is Sec-independent protein translocase protein TatA from Anaeromyxobacter sp. (strain Fw109-5).